Reading from the N-terminus, the 392-residue chain is F-box/kelch-repeat protein At4g39550 (392 aa).

Positions 1-12 (MSSPEKKRKTTK) are enriched in basic residues. The tract at residues 1–27 (MSSPEKKRKTTKKPSPTPQSTTPNPSL) is disordered. A compositionally biased stretch (low complexity) spans 18–27 (PQSTTPNPSL). The 47-residue stretch at 21–67 (TTPNPSLPDDLVVSCLARVSRLYYPTLSLVSKSFRSLIASPDLYKTR) folds into the F-box domain. 3 Kelch repeats span residues 148-194 (NIYN…VVEG), 195-242 (KIYV…KSAV), and 244-285 (EGEI…VVEN).

Part of a SCF (ASK-cullin-F-box) protein ligase complex. Interacts with ASK13 and ASK14.

It participates in protein modification; protein ubiquitination. In terms of biological role, component of SCF(ASK-cullin-F-box) E3 ubiquitin ligase complexes, which may mediate the ubiquitination and subsequent proteasomal degradation of target proteins. This Arabidopsis thaliana (Mouse-ear cress) protein is F-box/kelch-repeat protein At4g39550.